A 446-amino-acid chain; its full sequence is DNA repair protein RadA (446 aa).

Residues 10–27 (CSNCGNTSPKWSGQCFDC) form a C4-type zinc finger. Residue 91–98 (GDPGIGKS) coordinates ATP. Positions 250–254 (KNRFG) match the RadA KNRFG motif motif. The interval 349–446 (EVYLSIAGGL…HLKDLKEIIR (98 aa)) is lon-protease-like.

It belongs to the RecA family. RadA subfamily.

Its function is as follows. DNA-dependent ATPase involved in processing of recombination intermediates, plays a role in repairing DNA breaks. Stimulates the branch migration of RecA-mediated strand transfer reactions, allowing the 3' invading strand to extend heteroduplex DNA faster. Binds ssDNA in the presence of ADP but not other nucleotides, has ATPase activity that is stimulated by ssDNA and various branched DNA structures, but inhibited by SSB. Does not have RecA's homology-searching function. This chain is DNA repair protein RadA, found in Rickettsia felis (strain ATCC VR-1525 / URRWXCal2) (Rickettsia azadi).